The sequence spans 248 residues: tRNA (guanine-N(1)-)-methyltransferase (248 aa).

S-adenosyl-L-methionine is bound by residues G113 and 133–138 (IGDYVL).

The protein belongs to the RNA methyltransferase TrmD family. As to quaternary structure, homodimer.

It is found in the cytoplasm. It carries out the reaction guanosine(37) in tRNA + S-adenosyl-L-methionine = N(1)-methylguanosine(37) in tRNA + S-adenosyl-L-homocysteine + H(+). Functionally, specifically methylates guanosine-37 in various tRNAs. The sequence is that of tRNA (guanine-N(1)-)-methyltransferase from Shewanella loihica (strain ATCC BAA-1088 / PV-4).